The chain runs to 446 residues: DNA repair protein RadA (446 aa).

The segment at 10 to 27 (CSNCGNTSPKWSGQCFDC) adopts a C4-type zinc-finger fold. 91 to 98 (GDPGIGKS) serves as a coordination point for ATP. A RadA KNRFG motif motif is present at residues 250 to 254 (KNRFG). The tract at residues 349-446 (EVYLSIAGGL…HLKDLKEIIR (98 aa)) is lon-protease-like.

This sequence belongs to the RecA family. RadA subfamily.

Its function is as follows. DNA-dependent ATPase involved in processing of recombination intermediates, plays a role in repairing DNA breaks. Stimulates the branch migration of RecA-mediated strand transfer reactions, allowing the 3' invading strand to extend heteroduplex DNA faster. Binds ssDNA in the presence of ADP but not other nucleotides, has ATPase activity that is stimulated by ssDNA and various branched DNA structures, but inhibited by SSB. Does not have RecA's homology-searching function. This Rickettsia felis (strain ATCC VR-1525 / URRWXCal2) (Rickettsia azadi) protein is DNA repair protein RadA.